A 185-amino-acid polypeptide reads, in one-letter code: GTP cyclohydrolase 1 (185 aa).

Zn(2+) is bound by residues Cys75, His78, and Cys146.

The protein belongs to the GTP cyclohydrolase I family. In terms of assembly, toroid-shaped homodecamer, composed of two pentamers of five dimers.

The catalysed reaction is GTP + H2O = 7,8-dihydroneopterin 3'-triphosphate + formate + H(+). It functions in the pathway cofactor biosynthesis; 7,8-dihydroneopterin triphosphate biosynthesis; 7,8-dihydroneopterin triphosphate from GTP: step 1/1. The chain is GTP cyclohydrolase 1 from Alkalilimnicola ehrlichii (strain ATCC BAA-1101 / DSM 17681 / MLHE-1).